The chain runs to 236 residues: UPF0257 lipoprotein YnfC (236 aa).

Residues 1 to 16 (MKKPLLLTLLCMILAG) form the signal peptide. C17 carries N-palmitoyl cysteine lipidation. Residue C17 is the site of S-diacylglycerol cysteine attachment.

This sequence belongs to the UPF0257 family.

The protein resides in the cell membrane. The protein is UPF0257 lipoprotein YnfC of Salmonella paratyphi C (strain RKS4594).